We begin with the raw amino-acid sequence, 145 residues long: 3-hydroxyacyl-[acyl-carrier-protein] dehydratase FabZ (145 aa).

His-48 is an active-site residue.

Belongs to the thioester dehydratase family. FabZ subfamily.

It localises to the cytoplasm. It carries out the reaction a (3R)-hydroxyacyl-[ACP] = a (2E)-enoyl-[ACP] + H2O. Involved in unsaturated fatty acids biosynthesis. Catalyzes the dehydration of short chain beta-hydroxyacyl-ACPs and long chain saturated and unsaturated beta-hydroxyacyl-ACPs. The protein is 3-hydroxyacyl-[acyl-carrier-protein] dehydratase FabZ of Saccharophagus degradans (strain 2-40 / ATCC 43961 / DSM 17024).